We begin with the raw amino-acid sequence, 585 residues long: Arginine--tRNA ligase (585 aa).

Residues 131–141 (ANPTGPMHVGH) carry the 'HIGH' region motif.

It belongs to the class-I aminoacyl-tRNA synthetase family. As to quaternary structure, monomer.

The protein resides in the cytoplasm. It catalyses the reaction tRNA(Arg) + L-arginine + ATP = L-arginyl-tRNA(Arg) + AMP + diphosphate. The chain is Arginine--tRNA ligase from Rhizobium etli (strain CIAT 652).